A 291-amino-acid chain; its full sequence is G1/S-specific cyclin-D1 (291 aa).

Residue Thr-282 is modified to Phosphothreonine.

It belongs to the cyclin family. Cyclin D subfamily. In terms of assembly, interacts with the cdk4 and cdk6 protein kinases to form a serine/threonine kinase holoenzyme complex. The cyclin subunit imparts substrate specificity to the complex. In terms of processing, phosphorylation at Thr-282 by MAP kinases is required for ubiquitination and degradation by the DCX(AMBRA1) complex. Post-translationally, ubiquitinated by the DCX(AMBRA1) complex during the transition from G1 to S cell phase, leading to its degradation. The DCX(AMBRA1) complex represents the major regulator of CCND1 stability during the G1/S transition.

The protein resides in the nucleus. Its subcellular location is the cytoplasm. In terms of biological role, regulatory component of the cyclin D1-CDK4 (DC) complex that phosphorylates and inhibits members of the retinoblastoma (RB) protein family including RB1 and regulates the cell-cycle during G(1)/S transition. Phosphorylation of RB1 allows dissociation of the transcription factor E2F from the RB/E2F complex and the subsequent transcription of E2F target genes which are responsible for the progression through the G(1) phase. Hypophosphorylates RB1 in early G(1) phase. Cyclin D-CDK4 complexes are major integrators of various mitogenenic and antimitogenic signals. In Xenopus laevis (African clawed frog), this protein is G1/S-specific cyclin-D1 (ccnd1).